We begin with the raw amino-acid sequence, 372 residues long: GRASP65 homolog protein 1 (372 aa).

Methionine 1 carries the post-translational modification N-acetylmethionine. 2 consecutive PDZ GRASP-type domains span residues 66–183 (SGLR…WTPL) and 188–276 (FTYH…YGFL). The tract at residues 66 to 292 (SGLRIVWVDE…KHCPQQAQQQ (227 aa)) is GRASP. At serine 155 the chain carries Phosphoserine. The tract at residues 312–372 (VPSAFTAPPV…PPPQKQSSSD (61 aa)) is disordered.

As to quaternary structure, homodimer. Interacts with BUG1 (via C-terminus), probably forming a heterooligomer consisting of a GRH1 dimer and a BUG1 dimer. Interacts with COPII coat components SEC23, SEC24, SFB2 and SFB3. Post-translationally, N-terminal acetylation; by N-terminal acetyltransferase NatC.

The protein localises to the cytoplasm. The protein resides in the golgi apparatus. It localises to the cis-Golgi network membrane. In terms of biological role, involved in the spindle assembly checkpoint. Involved in ER to Golgi vesicle-mediated transport by either facilitating USO1-dependent and -independent tethering or increasing target accuracy of fusion events of COPII-coated vesicles. The polypeptide is GRASP65 homolog protein 1 (GRH1) (Saccharomyces cerevisiae (strain ATCC 204508 / S288c) (Baker's yeast)).